The following is a 338-amino-acid chain: Holliday junction branch migration complex subunit RuvB (338 aa).

The segment at 1 to 181 (MTTRTISPEK…FGVISRLEFY (181 aa)) is large ATPase domain (RuvB-L). ATP is bound by residues Leu20, Arg21, Gly62, Lys65, Thr66, Thr67, 128-130 (EDF), Arg171, Tyr181, and Arg218. Thr66 serves as a coordination point for Mg(2+). A small ATPAse domain (RuvB-S) region spans residues 182-252 (TDAELSTIVT…VVDESLKLLE (71 aa)). The segment at 255–338 (EKGFDQMDRT…APAPGQGALF (84 aa)) is head domain (RuvB-H). 3 residues coordinate DNA: Arg291, Arg310, and Arg315.

The protein belongs to the RuvB family. As to quaternary structure, homohexamer. Forms an RuvA(8)-RuvB(12)-Holliday junction (HJ) complex. HJ DNA is sandwiched between 2 RuvA tetramers; dsDNA enters through RuvA and exits via RuvB. An RuvB hexamer assembles on each DNA strand where it exits the tetramer. Each RuvB hexamer is contacted by two RuvA subunits (via domain III) on 2 adjacent RuvB subunits; this complex drives branch migration. In the full resolvosome a probable DNA-RuvA(4)-RuvB(12)-RuvC(2) complex forms which resolves the HJ.

The protein localises to the cytoplasm. It carries out the reaction ATP + H2O = ADP + phosphate + H(+). In terms of biological role, the RuvA-RuvB-RuvC complex processes Holliday junction (HJ) DNA during genetic recombination and DNA repair, while the RuvA-RuvB complex plays an important role in the rescue of blocked DNA replication forks via replication fork reversal (RFR). RuvA specifically binds to HJ cruciform DNA, conferring on it an open structure. The RuvB hexamer acts as an ATP-dependent pump, pulling dsDNA into and through the RuvAB complex. RuvB forms 2 homohexamers on either side of HJ DNA bound by 1 or 2 RuvA tetramers; 4 subunits per hexamer contact DNA at a time. Coordinated motions by a converter formed by DNA-disengaged RuvB subunits stimulates ATP hydrolysis and nucleotide exchange. Immobilization of the converter enables RuvB to convert the ATP-contained energy into a lever motion, pulling 2 nucleotides of DNA out of the RuvA tetramer per ATP hydrolyzed, thus driving DNA branch migration. The RuvB motors rotate together with the DNA substrate, which together with the progressing nucleotide cycle form the mechanistic basis for DNA recombination by continuous HJ branch migration. Branch migration allows RuvC to scan DNA until it finds its consensus sequence, where it cleaves and resolves cruciform DNA. This chain is Holliday junction branch migration complex subunit RuvB, found in Geobacter sulfurreducens (strain ATCC 51573 / DSM 12127 / PCA).